The chain runs to 130 residues: uncharacterized protein (130 aa).

The chain crosses the membrane as a helical span at residues 15–31; that stretch reads LYLCPAIIRLSSVCTLA.

It is found in the membrane. This is an uncharacterized protein from Saccharomyces cerevisiae (strain ATCC 204508 / S288c) (Baker's yeast).